Consider the following 234-residue polypeptide: Orotidine 5'-phosphate decarboxylase (234 aa).

Substrate-binding positions include Asp10, Lys31, 58–67 (DLKLHDIPNT), Thr121, Arg183, Gln192, Gly212, and Arg213. Lys60 functions as the Proton donor in the catalytic mechanism.

The protein belongs to the OMP decarboxylase family. Type 1 subfamily. As to quaternary structure, homodimer.

It carries out the reaction orotidine 5'-phosphate + H(+) = UMP + CO2. The protein operates within pyrimidine metabolism; UMP biosynthesis via de novo pathway; UMP from orotate: step 2/2. Functionally, catalyzes the decarboxylation of orotidine 5'-monophosphate (OMP) to uridine 5'-monophosphate (UMP). This is Orotidine 5'-phosphate decarboxylase from Halalkalibacterium halodurans (strain ATCC BAA-125 / DSM 18197 / FERM 7344 / JCM 9153 / C-125) (Bacillus halodurans).